Consider the following 353-residue polypeptide: MKKTAIALVVAGLAAASVAQAAPQENTFYAGVKAGQASFHDGLRALAREKNVGYHRNSFTYGVFGGYQILNQNNLGLAVELGYDDFGRAKGREKGKTVAKHTNHGAHLSLKGSYEVLDGLDVYGKAGVALVRSDYKFYEDANGTRDHKKGRHTARASGLFAVGAEYAVLPELAVRLEYQWLTRVGKYRPQDKPNTAINYNPWIGSINAGISYRFGQGAAPVVAAPEVVSKTFSLNSDVTFAFGKANLKPQAQATLDSIYGEMSQVKSAKVAVAGYTDRIGSDAFNVKLSQERADSVANYFVAKGVAADAISATGYGKANPVTGATCDQVKGRKALIACLAPDRRVEIAVNGTK.

The signal sequence occupies residues 1 to 21 (MKKTAIALVVAGLAAASVAQA). Beta stranded transmembrane passes span 27 to 37 (TFYAGVKAGQA), 58 to 69 (SFTYGVFGGYQI), 77 to 85 (LAVELGYDD), 104 to 115 (HGAHLSLKGSYE), 120 to 128 (LDVYGKAGV), 158 to 167 (GLFAVGAEYA), 172 to 179 (LAVRLEYQ), and 205 to 213 (SINAGISYR). The OmpA-like domain maps to 227-353 (VVSKTFSLNS…RVEIAVNGTK (127 aa)). Residues C326 and C338 are joined by a disulfide bond.

The protein belongs to the outer membrane OOP (TC 1.B.6) superfamily. OmpA family. In terms of assembly, monomer and homodimer.

The protein resides in the cell outer membrane. With TolR probably plays a role in maintaining the position of the peptidoglycan cell wall in the periplasm. Acts as a porin with low permeability that allows slow penetration of small solutes; an internal gate slows down solute passage. The chain is Outer membrane protein P5 from Haemophilus influenzae.